The following is an 86-amino-acid chain: Acyl-CoA-binding protein homolog 1 (86 aa).

An ACB domain is found at 1–86 (MTLSFDDAAA…VEELIAKYGA (86 aa)). An acyl-CoA is bound by residues Lys-13, 28–32 (YALFK), Lys-50, Lys-54, and Tyr-73.

The protein belongs to the ACBP family.

Its function is as follows. Binds medium- and long-chain acyl-CoA esters with very high affinity and may function as an intracellular carrier of acyl-CoA esters. The sequence is that of Acyl-CoA-binding protein homolog 1 (acbp-1) from Caenorhabditis elegans.